Reading from the N-terminus, the 467-residue chain is Involucrin (467 aa).

The disordered stretch occupies residues 48 to 467; it reads EIQEKGFPKH…ELENRTQQEK (420 aa). The segment covering 49–75 has biased composition (basic and acidic residues); that stretch reads IQEKGFPKHEEKRPNPVKDLPDQKCEH. Low complexity-rich tracts occupy residues 76–95 and 105–177; these read QQQPGPQKQQLQVKKSQQEL and QQLP…VPQE. 2 stretches are compositionally biased toward basic and acidic residues: residues 178–192 and 220–231; these read LHLRQHQEKLQDPEL and RHQEPQEQELHL. A compositionally biased stretch (low complexity) spans 278–290; it reads QQQQESPEPELQL. Basic and acidic residues-rich tracts occupy residues 295-318, 348-373, 380-391, 415-437, and 450-467; these read QSHEPDMAGDQKEKQKLHKPELYL, LEEKQHQKPPEPELHLGKQQESHEPD, EKQKLGEPELHL, KQEKASREQQLDYSHLEQEKELS, and KQLERKKHELENRTQQEK.

Belongs to the involucrin family. In terms of assembly, directly or indirectly cross-linked to cornifelin (CNFN). In terms of processing, substrate of transglutaminase. Specific glutamines or lysines are cross-linked to keratins, desmoplakin and to inter involucrin molecules. In terms of tissue distribution, keratinocytes of epidermis and other stratified squamous epithelia.

The protein resides in the cytoplasm. Its function is as follows. Part of the insoluble cornified cell envelope (CE) of stratified squamous epithelia. The chain is Involucrin (Ivl) from Mus musculus (Mouse).